Here is a 424-residue protein sequence, read N- to C-terminus: UPF0229 protein Sde_0732 (424 aa).

Positions 52–109 (IGIPSKDISEPVFHHDSGGVDTRVLPGNDQFHSGDRIQRPPSGQGGGGSGKGASDSGE) are disordered. Positions 58–69 (DISEPVFHHDSG) are enriched in basic and acidic residues.

The protein belongs to the UPF0229 family.

The protein is UPF0229 protein Sde_0732 of Saccharophagus degradans (strain 2-40 / ATCC 43961 / DSM 17024).